Here is a 126-residue protein sequence, read N- to C-terminus: Protein ApaG (126 aa).

One can recognise an ApaG domain in the interval 2–126 (SALDTSIRVE…FRLATPGLLH (125 aa)).

The sequence is that of Protein ApaG from Shewanella baltica (strain OS223).